The sequence spans 508 residues: Glycogen synthase (508 aa).

Residue K15 participates in ADP-alpha-D-glucose binding. Residues 483–508 are disordered; sequence ARNRAETRPQTASALSYREPRPAAEY.

Belongs to the glycosyltransferase 1 family. Bacterial/plant glycogen synthase subfamily.

It catalyses the reaction [(1-&gt;4)-alpha-D-glucosyl](n) + ADP-alpha-D-glucose = [(1-&gt;4)-alpha-D-glucosyl](n+1) + ADP + H(+). The protein operates within glycan biosynthesis; glycogen biosynthesis. Functionally, synthesizes alpha-1,4-glucan chains using ADP-glucose. The protein is Glycogen synthase of Paracidovorax citrulli (strain AAC00-1) (Acidovorax citrulli).